Here is a 1132-residue protein sequence, read N- to C-terminus: MKKAGRPVGNKAASGGGKGDSVTAGNCAGKNTVKSPTSAPLSKVKSNDDLLAAMAGSSAGTNNSVAKGKKSTSTHSTSCGTNTNNPDTKTKTTSGPSGKRTTSMTSKESNSSRERLRNSRNSSSKKQSSTGASDRAQPKHSRALAQTSDSESRMSKSKSDGQLSDKVALEAKVKNLLGLAKSKDVEILQLRGELRDMRVQLGLPEEDEEEERPPEREAAAVITAADVESTLLLLQEQNQAIRGELNLLKNENRMLKDRLNALGFSLEQRLDGADKTFGFPSTSPELSSGGAGAHGDCATVASSVEGSAPGSMEDLLTGGQRSGSTDNLDSESSEVYQAVTSSDDALDAPSGCGSSSSSESEGGPPACRSSSRKGSSGNTSEVSVACLTERIHQMEENQHSTSEELQATLQELADLQQITQELNGENERLGEEKVLLMDSLCQQSDKLEHCGRQIEYFRSLLDEHGVAYSVDEDIKSGRYMELEQRYVELAENARFEREQLLGVQQHLSNTLKMAEQDNAEAQNVIAALKERNHHMERLLDVERQERASMAAVLEECKAAVNNDQAELSRCRVLLEQERQKVAELYSIHNAGDKSDIHQLLEGVRLDKEEAEAKASKLQDDLGHARSEVACLQDTLNKLDAEYRDFQSVVQKELAEQKRAIEKQREDLQEKETEIGDMKETIFELEDEVEQHRAVKLHDNLIISDLENSMKKLQDQKHDMEREIKILHRRLREESAEWRQFQADLQTAVVIANDIKSEAQEEIGDLRRRLQEAQEKNEKLGKEIEEVKNRKQDEERGRVYNYMNAVERDLAALRQGMGLSRRPSTSSEPSPTVKTLIKSFDSASQGPGANATAVAAAAAAAAAAAAVTVTSTTPTAPLPRTPLSPSPMKTPPAAAVSPIQRHSITGSMAAAKPLSSLADKRPSYTDISMPAEHLLRAANSRPASALQRVSNMDTSKTITVSRRSSEEPKRDISTPDGGPASSLISMSSAAALSSSSSPTASVNPTARSRLREERKDPLSALAREYGGSKRNALLRWCQKKTEGYQNIDITNFSSSWNDGLAFCAVLHTYLPAHIPYQELNSQDKRRNFTLAFQAAESVGIKSTLDITDMVHTERPDWQSVMTYVTSIYKYFET.

Positions 1–166 (MKKAGRPVGN…SKSDGQLSDK (166 aa)) are disordered. 2 stretches are compositionally biased toward low complexity: residues 73–109 (STHSTSCGTNTNNPDTKTKTTSGPSGKRTTSMTSKES) and 119–129 (SRNSSSKKQSS). A compositionally biased stretch (basic and acidic residues) spans 150–159 (SESRMSKSKS). The stretch at 226-268 (DVESTLLLLQEQNQAIRGELNLLKNENRMLKDRLNALGFSLEQ) forms a coiled coil. The tract at residues 301–381 (ASSVEGSAPG…RKGSSGNTSE (81 aa)) is disordered. Polar residues predominate over residues 333 to 343 (SEVYQAVTSSD). Residues 348 to 377 (APSGCGSSSSSESEGGPPACRSSSRKGSSG) are compositionally biased toward low complexity. Coiled-coil stretches lie at residues 385-440 (ACLT…MDSL) and 478-798 (RYME…RGRV). 2 disordered regions span residues 869–895 (TSTTPTAPLPRTPLSPSPMKTPPAAAV) and 939–1016 (SRPA…RKDP). Residues 875–889 (APLPRTPLSPSPMKT) are compositionally biased toward pro residues. Residues 946 to 961 (QRVSNMDTSKTITVSR) are compositionally biased toward polar residues. The span at 962–972 (RSSEEPKRDIS) shows a compositional bias: basic and acidic residues. A compositionally biased stretch (low complexity) spans 979 to 1000 (ASSLISMSSAAALSSSSSPTAS). The Calponin-homology (CH) domain occupies 1026-1131 (GSKRNALLRW…YVTSIYKYFE (106 aa)).

Belongs to the cytospin-A family. In terms of assembly, may interact with both microtubules and actin cytoskeleton.

It is found in the cytoplasm. The protein resides in the cytoskeleton. The protein localises to the spindle. Its subcellular location is the cell junction. It localises to the gap junction. Functionally, involved in cytokinesis and spindle organization. May play a role in actin cytoskeleton organization and microtubule stabilization and hence required for proper cell adhesion and migration. This chain is Cytospin-A (specc1la), found in Danio rerio (Zebrafish).